A 147-amino-acid polypeptide reads, in one-letter code: Large ribosomal subunit protein uL22 (147 aa).

The segment at 110-147 (EEKKTVAKKAPAAKKTTTTKAPAKKTTSTKKATAKKES) is disordered. Over residues 117–140 (KKAPAAKKTTTTKAPAKKTTSTKK) the composition is skewed to low complexity.

Belongs to the universal ribosomal protein uL22 family. In terms of assembly, part of the 50S ribosomal subunit.

Its function is as follows. This protein binds specifically to 23S rRNA; its binding is stimulated by other ribosomal proteins, e.g. L4, L17, and L20. It is important during the early stages of 50S assembly. It makes multiple contacts with different domains of the 23S rRNA in the assembled 50S subunit and ribosome. In terms of biological role, the globular domain of the protein is located near the polypeptide exit tunnel on the outside of the subunit, while an extended beta-hairpin is found that lines the wall of the exit tunnel in the center of the 70S ribosome. This is Large ribosomal subunit protein uL22 from Campylobacter jejuni subsp. jejuni serotype O:6 (strain 81116 / NCTC 11828).